A 203-amino-acid polypeptide reads, in one-letter code: NAD(P)H dehydrogenase (quinone) (203 aa).

Positions 3 to 194 (VLIVYYSMYG…AGARFQGRYV (192 aa)) constitute a Flavodoxin-like domain. Residues 9 to 14 (SMYGHI) and 82 to 84 (TRF) contribute to the FMN site. Tyr11 is a binding site for NAD(+). Trp102 serves as a coordination point for substrate. FMN contacts are provided by residues 117 to 123 (SSATQHG) and His138.

This sequence belongs to the WrbA family. The cofactor is FMN.

It carries out the reaction a quinone + NADH + H(+) = a quinol + NAD(+). The enzyme catalyses a quinone + NADPH + H(+) = a quinol + NADP(+). This chain is NAD(P)H dehydrogenase (quinone), found in Geobacter sulfurreducens (strain ATCC 51573 / DSM 12127 / PCA).